Reading from the N-terminus, the 825-residue chain is MKKNNVNEQRRDFLKKTSLGVAGSALSGGMVGVVSKSAVAKEAEMKTVVTAAHWGSIGVVVQDGKVVKSGPAIEPAVPNELQTVVADQLYSERRVKCPMVRKGFLANPGKSDTTMRGRDEWVRVSWDEALDLVHNQLKRVRDEHGSTGIFAGSYGWFSCGSLHASRTLLQRYMNATGGFVGHKGDYSTGAAQVIMPHVLGTIEVYEQQTSWESILESSDIIVLWSANPLTTMRIAWMSTDQKGIEYFKKFQASGKRIICIDPQKSETCQMLNAEWIPVNTATDVPLMLGIAHTLVEQGKHDKDFLKKYTSGYAKFEEYLLGKTDGQPKTAEWAAKICGVPAETIKQLAADFASKRTMLMGGWGMQRQRHGEQTHWMLVTLASMLGQIGLPGGGFGLSYHYSNGGVPTATGGIIGSITASPSGKAGAKTWLDDTSKSAFPLARIADVLLHPGKKIQYNGTEITYPDIKAVYWAGGNPFVHHQDTNTLVKAFQKPDVVIVNEVNWTPTARMADIVLPATTSYERNDLTMAGDYSMMSVYPMKQVVPPQFEAKNDYDIFVELAKRAGVEEQYTEGKTEMEWLEEFYNAAFSAARANRVAMPRFDKFWAENKPLSFEAGEAAKKWVRYGEFREDPLLNPLGTPSGKIEIFSDVVEKMNYNDCKGHPSWMEPEEFAGNVTEEYPLALVTPHPYYRLHSQLAHTSLRQKYAVNDREPVMIHPEDAAARGIKDGDIVRIHSKRGQVLAGAAVTENIIKGTVALHEGAWYDPMYLGESEKPLCKNGCANVLTRDEGTSKLAQGNSPNTCIVQIEKFIGVAPEVTVFKQPKQVA.

The segment at residues 1–40 (MKKNNVNEQRRDFLKKTSLGVAGSALSGGMVGVVSKSAVA) is a signal peptide (tat-type signal). Ser-187 contributes to the Mo-bis(molybdopterin guanine dinucleotide) binding site.

It belongs to the prokaryotic molybdopterin-containing oxidoreductase family. The cofactor is Mo-bis(molybdopterin guanine dinucleotide). Predicted to be exported by the Tat system. The position of the signal peptide cleavage has not been experimentally proven.

It localises to the periplasm. It catalyses the reaction trimethylamine + 2 Fe(III)-[cytochrome c] + H2O = trimethylamine N-oxide + 2 Fe(II)-[cytochrome c] + 3 H(+). Its function is as follows. Reduces trimethylamine-N-oxide (TMAO) into trimethylamine; an anaerobic reaction coupled to energy-yielding reactions. The sequence is that of Trimethylamine-N-oxide reductase (torZ) from Haemophilus influenzae (strain ATCC 51907 / DSM 11121 / KW20 / Rd).